A 180-amino-acid chain; its full sequence is Small ribosomal subunit protein bS21c (180 aa).

The N-terminal 79 residues, 1-79, are a transit peptide targeting the chloroplast; it reads MASTSSLLNF…PSLAFSNTLY (79 aa). Over residues 14 to 45 the composition is skewed to low complexity; it reads LFPSNTSLPPSSNPKFPNPNSLSSQQNSISIS. 2 disordered regions span residues 14–49 and 124–180; these read LFPS…SKKH and NKQE…GAPF. The segment covering 130–147 has biased composition (basic residues); that stretch reads KRKHREAAKRNSRRRRGP. Positions 154–166 are enriched in basic and acidic residues; sequence GKEEATKVDKKED.

In terms of assembly, component of the chloroplast small ribosomal subunit (SSU). Mature 70S chloroplast ribosomes of higher plants consist of a small (30S) and a large (50S) subunit. The 30S small subunit contains 1 molecule of ribosomal RNA (16S rRNA) and 24 different proteins. The 50S large subunit contains 3 rRNA molecules (23S, 5S and 4.5S rRNA) and 33 different proteins. bS21c binds directly to 16S ribosomal RNA.

It is found in the plastid. Its subcellular location is the chloroplast. Functionally, component of the chloroplast ribosome (chloro-ribosome), a dedicated translation machinery responsible for the synthesis of chloroplast genome-encoded proteins, including proteins of the transcription and translation machinery and components of the photosynthetic apparatus. The chain is Small ribosomal subunit protein bS21c (rps21) from Spinacia oleracea (Spinach).